Reading from the N-terminus, the 149-residue chain is Aspartate 1-decarboxylase (149 aa).

Ser25 (schiff-base intermediate with substrate; via pyruvic acid) is an active-site residue. Ser25 is modified (pyruvic acid (Ser)). Thr57 lines the substrate pocket. Residue Tyr58 is the Proton donor of the active site. 73-75 (GAA) provides a ligand contact to substrate. The segment at 119-149 (GDPAAALPGDPSSLRGDVLDPAGARGLGGGA) is disordered.

It belongs to the PanD family. In terms of assembly, heterooctamer of four alpha and four beta subunits. It depends on pyruvate as a cofactor. Is synthesized initially as an inactive proenzyme, which is activated by self-cleavage at a specific serine bond to produce a beta-subunit with a hydroxyl group at its C-terminus and an alpha-subunit with a pyruvoyl group at its N-terminus.

The protein resides in the cytoplasm. The catalysed reaction is L-aspartate + H(+) = beta-alanine + CO2. It functions in the pathway cofactor biosynthesis; (R)-pantothenate biosynthesis; beta-alanine from L-aspartate: step 1/1. Functionally, catalyzes the pyruvoyl-dependent decarboxylation of aspartate to produce beta-alanine. In Parafrankia sp. (strain EAN1pec), this protein is Aspartate 1-decarboxylase.